A 486-amino-acid polypeptide reads, in one-letter code: tRNA sulfurtransferase (486 aa).

Positions 60–166 (QKICAMLINI…DNQLFIIIKR (107 aa)) constitute a THUMP domain. ATP contacts are provided by residues 184–185 (LI), Lys266, Gly288, and Gln297. Cys345 and Cys458 form a disulfide bridge. Residues 406–484 (LDSTDVVLDI…GFSNVKIYRP (79 aa)) form the Rhodanese domain. Cys458 acts as the Cysteine persulfide intermediate in catalysis.

It belongs to the ThiI family.

It is found in the cytoplasm. It catalyses the reaction [ThiI sulfur-carrier protein]-S-sulfanyl-L-cysteine + a uridine in tRNA + 2 reduced [2Fe-2S]-[ferredoxin] + ATP + H(+) = [ThiI sulfur-carrier protein]-L-cysteine + a 4-thiouridine in tRNA + 2 oxidized [2Fe-2S]-[ferredoxin] + AMP + diphosphate. It carries out the reaction [ThiS sulfur-carrier protein]-C-terminal Gly-Gly-AMP + S-sulfanyl-L-cysteinyl-[cysteine desulfurase] + AH2 = [ThiS sulfur-carrier protein]-C-terminal-Gly-aminoethanethioate + L-cysteinyl-[cysteine desulfurase] + A + AMP + 2 H(+). The protein operates within cofactor biosynthesis; thiamine diphosphate biosynthesis. In terms of biological role, catalyzes the ATP-dependent transfer of a sulfur to tRNA to produce 4-thiouridine in position 8 of tRNAs, which functions as a near-UV photosensor. Also catalyzes the transfer of sulfur to the sulfur carrier protein ThiS, forming ThiS-thiocarboxylate. This is a step in the synthesis of thiazole, in the thiamine biosynthesis pathway. The sulfur is donated as persulfide by IscS. The polypeptide is tRNA sulfurtransferase (Blochmanniella pennsylvanica (strain BPEN)).